Consider the following 936-residue polypeptide: E3 ubiquitin-protein ligase ZNRF3 (936 aa).

The interval 1-31 is disordered; sequence MRPRSGGRPGATGRRRRRLRRRPRGLRCSRL. The signal sequence occupies residues 1-55; the sequence is MRPRSGGRPGATGRRRRRLRRRPRGLRCSRLPPPPPLPLLLGLLLAAAGPGAARA. The segment covering 13-27 has biased composition (basic residues); sequence GRRRRRLRRRPRGLR. The Extracellular portion of the chain corresponds to 56 to 219; that stretch reads KETAFVEVVL…PRQPTEYFDM (164 aa). The helical transmembrane segment at 220 to 240 threads the bilayer; sequence GIFLAFFVVVSLVCLILLVKI. Residues 241–936 are Cytoplasmic-facing; that stretch reads KLKQRRSQNS…HSADSSSPGA (696 aa). The segment at 293–334 adopts an RING-type; atypical zinc-finger fold; it reads CAICLEKYIDGEELRVIPCTHRFHRKCVDPWLLQHHTCPHCR. 4 disordered regions span residues 608 to 693, 739 to 758, 849 to 875, and 892 to 936; these read SEAG…SPGA, LYEG…SQGL, THSL…ATRE, and CPPE…SPGA. Polar residues predominate over residues 654–684; sequence SGDQVSTCSLEMNYSSNSSLEHRGPNSSTSE. The segment covering 913 to 922 has biased composition (low complexity); sequence ESSTTATEAA.

It belongs to the ZNRF3 family. In terms of assembly, interacts with LRP6, FZD4, FZD5, FZD6 and FZD8. Interacts with RSPO1; interaction promotes indirect interaction with LGR4 and membrane clearance of ZNRF3. Also interacts with RSPO2. Interacts with LMBR1L.

The protein localises to the cell membrane. The catalysed reaction is S-ubiquitinyl-[E2 ubiquitin-conjugating enzyme]-L-cysteine + [acceptor protein]-L-lysine = [E2 ubiquitin-conjugating enzyme]-L-cysteine + N(6)-ubiquitinyl-[acceptor protein]-L-lysine.. It participates in protein modification; protein ubiquitination. With respect to regulation, negatively regulated by R-spondin proteins such as RSPO1: interaction with RSPO1 induces the indirect association between ZNRF3 and LGR4, promoting membrane clearance of ZNRF3. In terms of biological role, E3 ubiquitin-protein ligase that acts as a negative regulator of the Wnt signaling pathway by mediating the ubiquitination and subsequent degradation of Wnt receptor complex components Frizzled and LRP6. Acts on both canonical and non-canonical Wnt signaling pathway. Acts as a tumor suppressor in the intestinal stem cell zone by inhibiting the Wnt signaling pathway, thereby restricting the size of the intestinal stem cell zone. Along with RSPO2 and RNF43, constitutes a master switch that governs limb specification. In Homo sapiens (Human), this protein is E3 ubiquitin-protein ligase ZNRF3 (ZNRF3).